We begin with the raw amino-acid sequence, 260 residues long: MSTTNDKLIIAGREFSSRLMVGTGKYASNEQMVAALEASGAEIITVAVRRVNITDRSKESLLDFIDTRKYTLLPNTAGCYTADDAVRTCRLAREAGMSDMVKLEVLGNETTLYPDNEELLKAAKILVKDGFTVLPYTSDDPIICKKLEDIGCAAVMPLGAPIGSGLGIRNPYTIRIIMETVKVPVIVDAGVGTASDAAIAMELGVDGVLMNTGIAGAQNPIAMAEAMNLAVRAGRLAYRAGRIPKKLYATASSPIEGMIE.

The active-site Schiff-base intermediate with DXP is K102. 1-deoxy-D-xylulose 5-phosphate-binding positions include G163, 189 to 190 (AG), and 211 to 212 (NT).

Belongs to the ThiG family. As to quaternary structure, homotetramer. Forms heterodimers with either ThiH or ThiS.

The protein resides in the cytoplasm. The catalysed reaction is [ThiS sulfur-carrier protein]-C-terminal-Gly-aminoethanethioate + 2-iminoacetate + 1-deoxy-D-xylulose 5-phosphate = [ThiS sulfur-carrier protein]-C-terminal Gly-Gly + 2-[(2R,5Z)-2-carboxy-4-methylthiazol-5(2H)-ylidene]ethyl phosphate + 2 H2O + H(+). The protein operates within cofactor biosynthesis; thiamine diphosphate biosynthesis. Catalyzes the rearrangement of 1-deoxy-D-xylulose 5-phosphate (DXP) to produce the thiazole phosphate moiety of thiamine. Sulfur is provided by the thiocarboxylate moiety of the carrier protein ThiS. In vitro, sulfur can be provided by H(2)S. The chain is Thiazole synthase from Geobacter metallireducens (strain ATCC 53774 / DSM 7210 / GS-15).